Reading from the N-terminus, the 419-residue chain is Adenylosuccinate synthetase (419 aa).

GTP is bound by residues 11 to 17 (GDEGKGK) and 39 to 41 (GHS). D12 serves as the catalytic Proton acceptor. Residues D12 and G39 each contribute to the Mg(2+) site. IMP-binding positions include 12–15 (DEGK), 37–40 (NAGH), T129, R143, N221, T236, and R296. H40 functions as the Proton donor in the catalytic mechanism. 292–298 (VSTGRKR) contributes to the substrate binding site. Residues R298, 324–326 (KLD), and 408–410 (GTG) each bind GTP.

This sequence belongs to the adenylosuccinate synthetase family. Homodimer. Mg(2+) is required as a cofactor.

The protein localises to the cytoplasm. It carries out the reaction IMP + L-aspartate + GTP = N(6)-(1,2-dicarboxyethyl)-AMP + GDP + phosphate + 2 H(+). It functions in the pathway purine metabolism; AMP biosynthesis via de novo pathway; AMP from IMP: step 1/2. Functionally, plays an important role in the de novo pathway and in the salvage pathway of purine nucleotide biosynthesis. Catalyzes the first committed step in the biosynthesis of AMP from IMP. This chain is Adenylosuccinate synthetase, found in Chaetomium globosum (strain ATCC 6205 / CBS 148.51 / DSM 1962 / NBRC 6347 / NRRL 1970) (Soil fungus).